A 393-amino-acid polypeptide reads, in one-letter code: Protein TsgA (393 aa).

Transmembrane regions (helical) follow at residues 11 to 31 (WISF…GMVM), 51 to 71 (FLNA…EIIP), 78 to 98 (FGFI…SLAL), 101 to 121 (AAMF…TFLI), 134 to 154 (LLFT…VAAF), 162 to 182 (WYWV…LTFG), 206 to 226 (IGVL…LGFI), 245 to 265 (ALVS…SFIL), 273 to 293 (ILTV…TGTQ), 298 to 318 (WFIL…ITLG), 332 to 352 (FILT…GPIV), and 361 to 381 (LLTA…LGFV).

Belongs to the major facilitator superfamily. TsgA family.

The protein localises to the cell inner membrane. The sequence is that of Protein TsgA from Salmonella paratyphi B (strain ATCC BAA-1250 / SPB7).